The sequence spans 236 residues: tRNA (guanine-N(7)-)-methyltransferase (236 aa).

Residues Gly54, 77 to 78 (EI), 110 to 111 (NA), and Leu130 contribute to the S-adenosyl-L-methionine site. Asp133 is an active-site residue. S-adenosyl-L-methionine is bound at residue 208–210 (TEE).

This sequence belongs to the class I-like SAM-binding methyltransferase superfamily. TrmB family.

It is found in the nucleus. It catalyses the reaction guanosine(46) in tRNA + S-adenosyl-L-methionine = N(7)-methylguanosine(46) in tRNA + S-adenosyl-L-homocysteine. It functions in the pathway tRNA modification; N(7)-methylguanine-tRNA biosynthesis. Functionally, catalyzes the formation of N(7)-methylguanine at position 46 (m7G46) in tRNA. This Bombyx mori (Silk moth) protein is tRNA (guanine-N(7)-)-methyltransferase.